A 187-amino-acid polypeptide reads, in one-letter code: Glutathione peroxidase 7 (187 aa).

An N-terminal signal peptide occupies residues Met1–Ala19. Cys57 is an active-site residue.

Belongs to the glutathione peroxidase family. In terms of tissue distribution, expressed in esophageal epithelial cells; expression is up-regulated after exposure to acidic bile acids.

Its subcellular location is the secreted. It carries out the reaction 2 glutathione + H2O2 = glutathione disulfide + 2 H2O. In terms of biological role, it protects esophageal epithelia from hydrogen peroxide-induced oxidative stress. It suppresses acidic bile acid-induced reactive oxygen species (ROS) and protects against oxidative DNA damage and double-strand breaks. In Homo sapiens (Human), this protein is Glutathione peroxidase 7 (GPX7).